Consider the following 36-residue polypeptide: Light-harvesting protein B-1015 gamma chain (36 aa).

Functionally, one of the components of the bacteriochlorophyll-protein complex in the chromatophore membrane. This chain is Light-harvesting protein B-1015 gamma chain, found in Blastochloris viridis (Rhodopseudomonas viridis).